We begin with the raw amino-acid sequence, 276 residues long: 2-dehydro-3-deoxyphosphooctonate aldolase (276 aa).

Belongs to the KdsA family.

Its subcellular location is the cytoplasm. The catalysed reaction is D-arabinose 5-phosphate + phosphoenolpyruvate + H2O = 3-deoxy-alpha-D-manno-2-octulosonate-8-phosphate + phosphate. It participates in carbohydrate biosynthesis; 3-deoxy-D-manno-octulosonate biosynthesis; 3-deoxy-D-manno-octulosonate from D-ribulose 5-phosphate: step 2/3. The protein operates within bacterial outer membrane biogenesis; lipopolysaccharide biosynthesis. The polypeptide is 2-dehydro-3-deoxyphosphooctonate aldolase (Xanthomonas oryzae pv. oryzae (strain MAFF 311018)).